The primary structure comprises 381 residues: EPS I polysaccharide export outer membrane protein EpsA (381 aa).

The signal sequence occupies residues 1–23 (MFVSIPNIRKAVVSLSVVPLLAA). C24 carries N-palmitoyl cysteine lipidation. C24 is lipidated: S-diacylglycerol cysteine.

Belongs to the BexD/CtrA/VexA family.

Its subcellular location is the cell outer membrane. Probably involved in polymerization and/or export of exopolysaccharide EPS I which functions as a virulence factor. The polypeptide is EPS I polysaccharide export outer membrane protein EpsA (epsA) (Ralstonia nicotianae (strain ATCC BAA-1114 / GMI1000) (Ralstonia solanacearum)).